The chain runs to 289 residues: Golgi to ER traffic protein 2 (289 aa).

The segment covering 1–10 (MSEVSEAEKR) has biased composition (basic and acidic residues). A disordered region spans residues 1–68 (MSEVSEAEKR…LQRGSNSGQS (68 aa)). The Cytoplasmic segment spans residues 1 to 153 (MSEVSEAEKR…VGVHQFQVRQ (153 aa)). Over residues 11–21 (RILREKRKQKF) the composition is skewed to basic residues. Residues 33–68 (ITTQQPGGASGDSTVTSAEISDNEGSLQRGSNSGQS) show a composition bias toward polar residues. A helical transmembrane segment spans residues 154 to 173 (LKAYMLLLRWAILLPFIYYV). Residues 174–196 (MHPGTAHWLHTSRFLHFVMEPRN) lie on the Lumenal side of the membrane. The helical transmembrane segment at 197-216 (FFMVFTTFEVASISIYYQVL) threads the bilayer. The Cytoplasmic segment spans residues 217–263 (LTLERTNKVNSLSYSSKLVTWAGLVPDGMLPIDNLQGKVVVALHYWD). A helical transmembrane segment spans residues 264–284 (ILSMYLTDLSLCLVAAGLMKY). Topologically, residues 285–289 (YHAAP) are lumenal.

This sequence belongs to the GET2 family. Component of the Golgi to ER traffic (GET) complex, which is composed of GET1, GET2 and GET3. Within the complex, GET1 and GET2 form a heterotetramer which is stabilized by phosphatidylinositol binding and which binds to the GET3 homodimer.

Its subcellular location is the endoplasmic reticulum membrane. It localises to the golgi apparatus membrane. Functionally, required for the post-translational delivery of tail-anchored (TA) proteins to the endoplasmic reticulum. Together with GET1, acts as a membrane receptor for soluble GET3, which recognizes and selectively binds the transmembrane domain of TA proteins in the cytosol. The GET complex cooperates with the HDEL receptor ERD2 to mediate the ATP-dependent retrieval of resident ER proteins that contain a C-terminal H-D-E-L retention signal from the Golgi to the ER. In Eremothecium gossypii (strain ATCC 10895 / CBS 109.51 / FGSC 9923 / NRRL Y-1056) (Yeast), this protein is Golgi to ER traffic protein 2.